Reading from the N-terminus, the 259-residue chain is Hydroxyethylthiazole kinase (259 aa).

Residue methionine 37 coordinates substrate. Positions 113 and 158 each coordinate ATP. Residue glycine 185 coordinates substrate.

The protein belongs to the Thz kinase family. Mg(2+) is required as a cofactor.

The catalysed reaction is 5-(2-hydroxyethyl)-4-methylthiazole + ATP = 4-methyl-5-(2-phosphooxyethyl)-thiazole + ADP + H(+). Its pathway is cofactor biosynthesis; thiamine diphosphate biosynthesis; 4-methyl-5-(2-phosphoethyl)-thiazole from 5-(2-hydroxyethyl)-4-methylthiazole: step 1/1. In terms of biological role, catalyzes the phosphorylation of the hydroxyl group of 4-methyl-5-beta-hydroxyethylthiazole (THZ). This Helicobacter pylori (strain Shi470) protein is Hydroxyethylthiazole kinase.